The sequence spans 247 residues: NAD-dependent protein deacetylase (247 aa).

The region spanning 1–247 (METFKSILHE…EFARSLGMKK (247 aa)) is the Deacetylase sirtuin-type domain. NAD(+) is bound by residues A20, T24, F31, R32, Q100, I102, D103, and H118. F31 lines the nicotinamide pocket. 2 residues coordinate nicotinamide: I102 and D103. The active-site Proton acceptor is the H118. Zn(2+)-binding residues include C126, C129, C146, and C156. NAD(+)-binding residues include T192, S193, N218, and I236.

It belongs to the sirtuin family. Class U subfamily. Requires Zn(2+) as cofactor.

The protein resides in the cytoplasm. The enzyme catalyses N(6)-acetyl-L-lysyl-[protein] + NAD(+) + H2O = 2''-O-acetyl-ADP-D-ribose + nicotinamide + L-lysyl-[protein]. Functionally, NAD-dependent protein deacetylase which modulates the activities of several enzymes which are inactive in their acetylated form. In Bacillus subtilis (strain 168), this protein is NAD-dependent protein deacetylase.